The chain runs to 1453 residues: ABC transporter G family member 34 (1453 aa).

The disordered stretch occupies residues 1 to 24 (MLGRDEDLVRTMSGRGSLGSTSHR). The region spanning 173–446 (LGLFHLLPSK…FEYMGFKCPE (274 aa)) is the ABC transporter 1 domain. Residue 206–213 (GPPSSGKT) coordinates ATP. The ABC transmembrane type-2 1 domain occupies 524 to 737 (DLFKACFDRE…GQTALVINEF (214 aa)). The next 6 membrane-spanning stretches (helical) occupy residues 542-562 (FVYV…MTVY), 582-602 (LFFS…FTVM), 621-641 (FALP…VIWI), 661-681 (LLAY…LGAL), 687-707 (IANS…GFII), and 773-793 (FWIC…CYII). Positions 852–1105 (LAFNNVNYYV…LVEYFEAIEG (254 aa)) constitute an ABC transporter 2 domain. 897–904 (GVSGAGKT) provides a ligand contact to ATP. Residues 1177–1391 (TQTKACFWKM…TLYGIITSQV (215 aa)) form the ABC transmembrane type-2 2 domain. The next 7 membrane-spanning stretches (helical) occupy residues 1196–1216 (YNAI…LLFW), 1230–1250 (NFFG…AATV), 1289–1309 (IQTG…WTVV), 1311–1331 (FFWF…YGMM), 1341–1361 (IAGI…GFLI), 1366–1386 (IPIW…LYGI), and 1422–1442 (FLPV…FAFA).

Belongs to the ABC transporter superfamily. ABCG family. PDR (TC 3.A.1.205) subfamily. In terms of tissue distribution, expressed in roots at low levels.

It is found in the membrane. In terms of biological role, may be a general defense protein. This is ABC transporter G family member 34 (ABCG34) from Arabidopsis thaliana (Mouse-ear cress).